Consider the following 215-residue polypeptide: MKTVLLTGFDPFGGENINPAWEVAKGLHEKTIGEYKIISKQVPTVFHKSISVLKEYIEELAPEIIICIGQAGGRPDITIERVAINIDDARIADNEGNQPVDVPVVEEGVIAYWSTLPMKAIVKKLREEGIPSSVSQTAGTFVCNHLFYGLMHELEKHDKKIKGGFIHIPFLPEQASNYPGQPSMSLSTIRKGIELAIEVTTTVKVDIVEVGGATH.

Residues E80, C143, and H167 contribute to the active site.

The protein belongs to the peptidase C15 family. Homotetramer.

Its subcellular location is the cytoplasm. It carries out the reaction Release of an N-terminal pyroglutamyl group from a polypeptide, the second amino acid generally not being Pro.. Functionally, removes 5-oxoproline from various penultimate amino acid residues except L-proline. This Bacillus cereus (strain ATCC 14579 / DSM 31 / CCUG 7414 / JCM 2152 / NBRC 15305 / NCIMB 9373 / NCTC 2599 / NRRL B-3711) protein is Pyrrolidone-carboxylate peptidase.